The sequence spans 1520 residues: MMNQQQQQQQPPTTSPTQQQQLTQLQTHQYFQNKFKLFYKRELDEADPLEIYWRECYDKIELLLLNSSEAEINNYLIEKSASVESSGNNDQSNKFHTEVTIGFLYAILLGSPQNIALSHQYFKSLTFFTKDSLALFCSLLKKLIADKFQKLNDTPRQQVVWIINELIATNHQDCESVTSIILRHIYGGNFTSKNLSLSHSMLNMFLTHRQWLNSRPLLIPTILYNFLRLIQDHISRPQGLHNPTHLKDEINFCLDLLKNKFQECLVIGRDLIRLLQYLSTKTIEFEQLWKDLNSKPTTFAPGYYDIIQSMKTPTPKHFLQSRLSPEMELQVLYILKEVKFGNQKRYQQWFVTKYLVTPESESLIPDIIRYICCVYHPPNHVLCSDIVPRWAIIGWLLKHCKSDAWRNYSKLSLFLDWLYFEPKIDSIMNIEPAILLMAGSVKKYADMTIDLVEFIVGTLLDSYDIQRKDAIRQGIHNSFATVLEKGVVQSLSHVFPPDSLGPSLFEKVKHYFHQFLTNSPIHQLHSQQQQLQQQQLQQPQQPQQQQQPPQYKPYPQQPINKQLPLQMSPQQQSQQQLQQQQLQQQLQQQQQQQQPPQQPPPQQQPQQQPPQQQPQQQPQQQQPQLNISTGNLPNIQQPMVKSPPLSSNTLVSPTSSSSPTSSNLPTNNSRVLNKSGVDIHHVSNLSPQVISQKPQSQQTPSLHSSSQSVLQQKSPPLKETSLFEQQQPSQQLPSQIVKNSPPNLSMTNENISNPPPPPHAKISSDHASPLINSSNSNITTPNPDSQSQIPIPPPISQSPSTKNIDVIMSELNDEPPKLSKSSPTQSNIIVPPPTHKPPQTTISSSSPLLQPQTQPQPQTQPQPQTLQQSTTPSLSSSSTPTIPISPPLLPTQLEIDIQPPPPPPSSQPLQPPPPPPPSQNIKDETLNSLIELNSSIKLDEEIKMEIPDILLTIGSKPQFQPTNITITLGSILSNFNEKISKQPNITLQNELTDSLTQYLSQVLKPELQIDLSTTPSLLSLFCNFQVIHHIFRATFSPTDNSITTTTTTTAAATTTTTTTPTIVKPMFNILKELYKIYPSIGFKIMIWSIITSPGGLNITNNGCTYIYPDIECDNSFSNSDDNESTNNNNNGVEQKPQQQQQQQQQQQINENTHNNNNNNNNNNNNNNNNNNENNITNNSQNITIKEESIFKIEKLLESVQDSNGNRNILGNYLNFHSNLLGGQPPPPPPPQQPNKIVEQIISDCIEANNVGAFNYLVPILYKSFSNLLVGNSDFLYLVLSCINPRQHFRICNKISMGEFRVFGNEMKSLISQSFKWESFEQNYLWQMLIAEDSVYSGMIVKEYPFIISKLDPYNNSEVLQNLTITLKETKFYDFNIFSETLLLNDYFYTFVFCLFSFWLKNNTTQTFNYINQIFDFYLSNNNNNNNNNRKLVERILYFYNIFLKKYGEERIKWSDMIDSDRVSKVLQRSTNSNLFQKYSNLGSLVLPSQSSNIKNDNNPTLSKHQNSDDDSNPKKRFRKE.

6 disordered regions span residues 1 to 23 (MMNQ…QQLT), 523 to 671 (QLHS…NSRV), 689 to 801 (VISQ…SPST), 813 to 922 (DEPP…QNIK), 1116 to 1177 (FSNS…NITN), and 1489 to 1520 (QSSN…FRKE). Composition is skewed to low complexity over residues 527-549 (QQQQ…QQPP) and 557-595 (QPIN…QQQP). Residues 596–612 (PQQPPPQQQPQQQPPQQ) are compositionally biased toward pro residues. Over residues 613–625 (QPQQQPQQQQPQL) the composition is skewed to low complexity. Residues 626–639 (NISTGNLPNIQQPM) are compositionally biased toward polar residues. 3 stretches are compositionally biased toward low complexity: residues 642-669 (SPPL…TNNS), 694-717 (PQSQ…SPPL), and 725-735 (QQQPSQQLPSQ). Residues 736–752 (IVKNSPPNLSMTNENIS) show a composition bias toward polar residues. Residues 768-789 (SPLINSSNSNITTPNPDSQSQI) show a composition bias toward low complexity. Residues 819–828 (SKSSPTQSNI) are compositionally biased toward polar residues. Low complexity predominate over residues 837-882 (PPQTTISSSSPLLQPQTQPQPQTQPQPQTLQQSTTPSLSSSSTPTI). Residues 898–918 (QPPPPPPSSQPLQPPPPPPPS) show a composition bias toward pro residues. 2 stretches are compositionally biased toward low complexity: residues 1116–1130 (FSNS…NNNN) and 1137–1177 (QQQQ…NITN). Over residues 1489–1504 (QSSNIKNDNNPTLSKH) the composition is skewed to polar residues.

This sequence belongs to the Integrator subunit 3 family. In terms of assembly, component of the Integrator complex. The core complex associates with protein phosphatase 2A subunits, to form the Integrator-PP2A (INTAC) complex. Component of the SOSS complex.

The protein resides in the nucleus. The protein localises to the cytoplasm. Its function is as follows. Component of the integrator complex, a multiprotein complex that terminates RNA polymerase II (Pol II) transcription in the promoter-proximal region of genes. The integrator complex provides a quality checkpoint during transcription elongation by driving premature transcription termination of transcripts that are unfavorably configured for transcriptional elongation: the complex terminates transcription by (1) catalyzing dephosphorylation of the C-terminal domain (CTD) of Pol II subunit polr2a, (2) degrading the exiting nascent RNA transcript via endonuclease activity and (3) promoting the release of Pol II from bound DNA. The integrator complex is also involved in terminating the synthesis of non-coding Pol II transcripts, such as enhancer RNAs (eRNAs), small nuclear RNAs (snRNAs), telomerase RNAs and long non-coding RNAs (lncRNAs). In terms of biological role, component of the SOSS complex, a multiprotein complex that functions downstream of the MRN complex to promote DNA repair and G2/M checkpoint. The SOSS complex associates with single-stranded DNA at DNA lesions and influences diverse endpoints in the cellular DNA damage response including cell-cycle checkpoint activation, recombinational repair and maintenance of genomic stability. The SOSS complex is required for efficient homologous recombination-dependent repair of double-strand breaks (DSBs) and ATM-dependent signaling pathways. In the SOSS complex, it is required for the assembly of the complex and for stabilization of the complex at DNA damage sites. This chain is Integrator complex subunit 3 homolog (ints3), found in Dictyostelium discoideum (Social amoeba).